The following is a 251-amino-acid chain: Probable transcriptional regulatory protein Franean1_5147 (251 aa).

The protein belongs to the TACO1 family.

Its subcellular location is the cytoplasm. In Parafrankia sp. (strain EAN1pec), this protein is Probable transcriptional regulatory protein Franean1_5147.